We begin with the raw amino-acid sequence, 378 residues long: Heat-inducible transcription repressor HrcA (378 aa).

The protein belongs to the HrcA family.

In terms of biological role, negative regulator of class I heat shock genes (grpE-dnaK-dnaJ and groELS operons). Prevents heat-shock induction of these operons. The protein is Heat-inducible transcription repressor HrcA of Synechocystis sp. (strain ATCC 27184 / PCC 6803 / Kazusa).